Consider the following 217-residue polypeptide: Large ribosomal subunit protein uL1 (217 aa).

The protein belongs to the universal ribosomal protein uL1 family.

The chain is Large ribosomal subunit protein uL1 (RpL10Ab) from Drosophila melanogaster (Fruit fly).